The chain runs to 515 residues: UPF0053 protein BUsg_314 (515 aa).

The next 7 membrane-spanning stretches (helical) occupy residues 14-34 (LTLV…VAIL), 49-69 (IGLG…SWVV), 79-99 (NFFS…FLLF), 125-145 (FWAV…DAII), 150-170 (MVNQ…LMLL), 185-205 (VVVL…AEAL), and 207-227 (FYIP…IEIF). CBS domains are found at residues 309-368 (MTPR…NIDV) and 372-432 (ASQI…DADE).

The protein belongs to the UPF0053 family.

It is found in the cell membrane. The chain is UPF0053 protein BUsg_314 from Buchnera aphidicola subsp. Schizaphis graminum (strain Sg).